The chain runs to 175 residues: MASLNDSHFALFNLPEQFGLDVSALDRAYRTVQAQVHPDRFAAAGDAQKRIAMQWATRTNEAYQTLHDPLKRARYLLSLRGIDVGAENNTAMEPAFLMQQMEWRESIEDASAAKNVDALDALLTDLRDEEKVRFTKLAALLDSGSNQAASEAVRQLMFIERVAAEIGTQIERLDN.

Positions 7–79 constitute a J domain; it reads SHFALFNLPE…LKRARYLLSL (73 aa).

Belongs to the HscB family. Interacts with HscA and stimulates its ATPase activity.

Co-chaperone involved in the maturation of iron-sulfur cluster-containing proteins. Seems to help targeting proteins to be folded toward HscA. This Paraburkholderia phymatum (strain DSM 17167 / CIP 108236 / LMG 21445 / STM815) (Burkholderia phymatum) protein is Co-chaperone protein HscB homolog.